A 448-amino-acid polypeptide reads, in one-letter code: tRNA(Ile)-lysidine synthase (448 aa).

25 to 30 is a binding site for ATP; the sequence is SGGSDS.

It belongs to the tRNA(Ile)-lysidine synthase family.

It localises to the cytoplasm. The enzyme catalyses cytidine(34) in tRNA(Ile2) + L-lysine + ATP = lysidine(34) in tRNA(Ile2) + AMP + diphosphate + H(+). In terms of biological role, ligates lysine onto the cytidine present at position 34 of the AUA codon-specific tRNA(Ile) that contains the anticodon CAU, in an ATP-dependent manner. Cytidine is converted to lysidine, thus changing the amino acid specificity of the tRNA from methionine to isoleucine. The sequence is that of tRNA(Ile)-lysidine synthase from Brucella melitensis biotype 2 (strain ATCC 23457).